Consider the following 151-residue polypeptide: Transcriptional regulator MraZ (151 aa).

SpoVT-AbrB domains are found at residues 5–52 (ANAI…PLSE) and 81–124 (AVDL…DEDA).

Belongs to the MraZ family. In terms of assembly, forms oligomers.

It localises to the cytoplasm. Its subcellular location is the nucleoid. This is Transcriptional regulator MraZ from Pseudomonas syringae pv. tomato (strain ATCC BAA-871 / DC3000).